The sequence spans 305 residues: Sodium/potassium-transporting ATPase subunit beta-1 (305 aa).

Topologically, residues 1 to 32 (MAREKSTDDGGGWKKFLWDSEKKQVLGRTGTS) are cytoplasmic. The helical; Signal-anchor for type II membrane protein transmembrane segment at 33–53 (WFKIFVFYLIFYGCLAGIFIG) threads the bilayer. The Extracellular segment spans residues 54–305 (TIQVMLLTIS…RFEVKIEVKS (252 aa)). An N-linked (GlcNAc...) asparagine glycan is attached at asparagine 114. A disulfide bond links cysteine 127 and cysteine 150. Residue asparagine 159 is glycosylated (N-linked (GlcNAc...) asparagine). Residues cysteine 160 and cysteine 176 are joined by a disulfide bond. Asparagine 194 and asparagine 267 each carry an N-linked (GlcNAc...) asparagine glycan. A disulfide bond links cysteine 215 and cysteine 278.

Belongs to the X(+)/potassium ATPases subunit beta family. In terms of assembly, the sodium/potassium-transporting ATPase is composed of a catalytic alpha subunit, an auxiliary non-catalytic beta subunit and an additional regulatory subunit.

It localises to the cell membrane. Functionally, this is the non-catalytic component of the active enzyme, which catalyzes the hydrolysis of ATP coupled with the exchange of Na(+) and K(+) ions across the plasma membrane. The beta subunit regulates, through assembly of alpha/beta heterodimers, the number of sodium pumps transported to the plasma membrane. In Tetronarce californica (Pacific electric ray), this protein is Sodium/potassium-transporting ATPase subunit beta-1 (atp1b1).